We begin with the raw amino-acid sequence, 105 residues long: U2-lycotoxin-Ls1d (105 aa).

The signal sequence occupies residues Met-1–Ser-17. Residues Phe-18–Arg-41 constitute a propeptide that is removed on maturation. 4 disulfides stabilise this stretch: Cys-51–Cys-67, Cys-58–Cys-97, Cys-60–Cys-83, and Cys-69–Cys-81.

The protein belongs to the neurotoxin 04 (omega-agtx) family. 01 (type I omega-agtx) subfamily. In terms of tissue distribution, expressed by the venom gland.

The protein resides in the secreted. In terms of biological role, insecticidal to house crickets. It induces an excitatory slow-onset impact that leads to irreversible spastic paralysis. It also modifies human voltage-gated potassium channel Kv1.5/KCNA5. Most likely, it binds to the voltage-sensing domain of the channel, suggesting it does not block the pore but prevents its opening at physiological membrane potentials. The recombinant peptide binds to the channel in an irreversible manner and slows down the hKv1.5 current activation kinetics. It is not toxic to mice, when intracranially injected (at 0.5 ug/g mouse). In Lycosa singoriensis (Wolf spider), this protein is U2-lycotoxin-Ls1d.